A 379-amino-acid polypeptide reads, in one-letter code: Cytoplasmic tRNA 2-thiolation protein 1 (379 aa).

The protein belongs to the TtcA family. CTU1/NCS6/ATPBD3 subfamily.

The protein localises to the cytoplasm. It participates in tRNA modification; 5-methoxycarbonylmethyl-2-thiouridine-tRNA biosynthesis. Functionally, plays a central role in 2-thiolation of mcm(5)S(2)U at tRNA wobble positions of tRNA(Lys), tRNA(Glu) and tRNA(Gln). Directly binds tRNAs and probably acts by catalyzing adenylation of tRNAs, an intermediate required for 2-thiolation. It is unclear whether it acts as a sulfurtransferase that transfers sulfur from thiocarboxylated URM1 onto the uridine of tRNAs at wobble position. Prior mcm(5) tRNA modification by the elongator complex is required for 2-thiolation. May also be involved in protein urmylation. The polypeptide is Cytoplasmic tRNA 2-thiolation protein 1 (Lodderomyces elongisporus (strain ATCC 11503 / CBS 2605 / JCM 1781 / NBRC 1676 / NRRL YB-4239) (Yeast)).